The chain runs to 252 residues: Putative teichuronic acid biosynthesis glycosyltransferase TuaG (252 aa).

Belongs to the glycosyltransferase 2 family.

Its pathway is cell wall biogenesis; teichuronic acid biosynthesis. In Bacillus subtilis (strain 168), this protein is Putative teichuronic acid biosynthesis glycosyltransferase TuaG (tuaG).